Here is a 148-residue protein sequence, read N- to C-terminus: Lysozyme C (148 aa).

Residues Met1–Gly18 form the signal peptide. One can recognise a C-type lysozyme domain in the interval Lys19–Val148. Disulfide bonds link Cys24–Cys146, Cys48–Cys134, Cys83–Cys99, and Cys95–Cys113. Catalysis depends on residues Glu53 and Asp71.

Belongs to the glycosyl hydrolase 22 family. Monomer.

The protein resides in the secreted. It catalyses the reaction Hydrolysis of (1-&gt;4)-beta-linkages between N-acetylmuramic acid and N-acetyl-D-glucosamine residues in a peptidoglycan and between N-acetyl-D-glucosamine residues in chitodextrins.. Lysozymes have primarily a bacteriolytic function; those in tissues and body fluids are associated with the monocyte-macrophage system and enhance the activity of immunoagents. The protein is Lysozyme C (LYZ) of Saguinus oedipus (Cotton-top tamarin).